Here is a 606-residue protein sequence, read N- to C-terminus: MGPKRRQLTFREKSRIIQEVEENPDLRKGEIARRFNIPPSTLSTILKNKRAILASERKYGVASTCRKTNKLSPYDKLEGLLIAWFQQIRAAGLPVKGIILKEKALRIAEELGMDDFTASNGWLDRFRRRHGVVACSGVTRSRARTSTPRAPAAPAGPAAVPSEGSGGSTPGWRTREEQPPSVAEGYASQDVFSATETSLWYDFLSDQASGLWGGDGTARQATQRLSVLLCANRDGSEKLPPLVAGKSAKPRASQGGLPCDYTANSKGGVTTQALAKYLKALDTRMAAESRRVLLLAGRLAAQSLDTSGLRHVQLAFFPPGTVHPLERGVVQQVKGHYRQAMLLKAMAALEGQDPSGLQLGLVEALHFVAAAWQAVEPADIATCFREAGFGGGLNATITTSFKSEGEEEEEEEEEEEEEEEEEGEGEEEEEEEEEGEEEGGEGEEVGEEEEVEEEGDESDEEEEEEEEEEEESSSEGLEAEDWAQGVVEASGGFGGYSVQEEAQCPTLHFLEGGEDSDSDSDEEEEDEEEDEEDEEDDDDDEDGDEVPVPSFGEAMAYFAMVKRYLTSFPIDDRVQSHILHLEHDLVHVTRKNHAWQAGVRGLGHQS.

G2 is modified (n,N,N-trimethylglycine). The HTH psq-type domain maps to 2 to 52; sequence GPKRRQLTFREKSRIIQEVEENPDLRKGEIARRFNIPPSTLSTILKNKRAI. 2 DNA-binding regions (H-T-H motif) span residues 28 to 48 and 97 to 129; these read KGEI…ILKN and GIIL…FRRR. The HTH CENPB-type domain occupies 65-136; the sequence is CRKTNKLSPY…RRRHGVVACS (72 aa). Positions 138–184 are disordered; it reads VTRSRARTSTPRAPAAPAGPAAVPSEGSGGSTPGWRTREEQPPSVAE. The span at 144 to 163 shows a compositional bias: low complexity; it reads RTSTPRAPAAPAGPAAVPSE. A Phosphoserine modification is found at S165. K246 is covalently cross-linked (Glycyl lysine isopeptide (Lys-Gly) (interchain with G-Cter in SUMO2)). Disordered regions lie at residues 392 to 480 and 504 to 549; these read GLNA…LEAE and CPTL…VPVP. A phosphothreonine mark is found at T396 and T398. 2 stretches are compositionally biased toward acidic residues: residues 405–480 and 512–545; these read GEEE…LEAE and GGED…DGDE. Positions 543–606 are homodimerization; the sequence is GDEVPVPSFG…AGVRGLGHQS (64 aa).

In terms of assembly, antiparallel homodimer. Interacts with CENPT. Identified in a centromere complex containing histones H2A, H2B and H4, and at least CENPA, CENPB, CENPC, CENPT, CENPN, HJURP, SUPT16H, SSRP1 and RSF1. Post-translationally, poly-ADP-ribosylated by PARP1. In terms of processing, N-terminally methylated by METTL11A/NTM1. Alpha-N-methylation is stimulated in response to extracellular stimuli, including increased cell density and heat shock, and seems to facilitate binding to CENP-B boxes. Chromatin-bound CENP-B is primarily trimethylated.

It is found in the nucleus. Its subcellular location is the chromosome. It localises to the centromere. Functionally, interacts with centromeric heterochromatin in chromosomes and binds to a specific 17 bp subset of alphoid satellite DNA, called the CENP-B box. May organize arrays of centromere satellite DNA into a higher-order structure which then directs centromere formation and kinetochore assembly in mammalian chromosomes. This is Major centromere autoantigen B (CENPB) from Cricetulus griseus (Chinese hamster).